Here is a 68-residue protein sequence, read N- to C-terminus: Cytotoxic linear peptide IsCT (68 aa).

Positions 1 to 23 (MKTQFAILLVALVLFQMFAQSDA) are cleaved as a signal peptide. A Phenylalanine amide modification is found at phenylalanine 36. Residues 40–68 (GLSDLDGLDELFDGEISKADRDFLRELMR) constitute a propeptide that is removed on maturation.

This sequence belongs to the non-disulfide-bridged peptide (NDBP) superfamily. Short antimicrobial peptide (group 4) family. IsCTf is an enzymatic proteolytic cleavage product of IsCT by the proteases present in the venom. In terms of tissue distribution, expressed by the venom gland.

The protein resides in the secreted. It is found in the target cell membrane. Its function is as follows. Shows weak hemolytic activity and antibacterial activity against both Gram-positive and Gram-negative bacteria probably by forming pores in the cell membrane. IsCT adopts an amphipathic alpha-helical structure. Functionally, shows neither hemolytic, nor antibacterial activities, probably because it cannot adopt amphipathic alpha-helical structure. The chain is Cytotoxic linear peptide IsCT from Opisthacanthus madagascariensis (Scorpion).